The following is a 441-amino-acid chain: Alpha-monoglucosyldiacylglycerol synthase (441 aa).

This sequence belongs to the glycosyltransferase group 1 family. Glycosyltransferase 4 subfamily. Mg(2+) serves as cofactor.

It localises to the cell membrane. It carries out the reaction a 1,2-diacyl-sn-glycerol + UDP-alpha-D-glucose = a 1,2-diacyl-3-O-(alpha-D-glucopyranosyl)-sn-glycerol + UDP + H(+). With respect to regulation, activated by the negatively charged lipid phosphatidylglycerol (PG). Glucosyltransferase involved in the biosynthesis of the non-bilayer-prone membrane lipid alpha-monoglucosyldiacylglycerol. This is a major component for maintaining a certain anionic lipid surface charge density, for balancing the bilayer to non-bilayer phase equilibria and for keeping a constant lipid bilayer spontaneous curvature (curvature packing stress). Catalyzes the transfer of a glucosyl residue from UDP-Glc to diacylglycerol (DAG) acceptor to form the corresponding alpha-glucosyl-DAG (1,2-diacyl-3-O-(alpha-D-glucopyranosyl)-sn-glycerol). It can only use UDP-Glc as sugar donor. This chain is Alpha-monoglucosyldiacylglycerol synthase, found in Streptococcus pneumoniae (strain ATCC BAA-255 / R6).